The chain runs to 359 residues: Outer membrane protein P5 (359 aa).

The signal sequence occupies residues 1–21 (MKKTAIALVVAGLAAASVAQA). 8 beta stranded membrane-spanning segments follow: residues 27–37 (TFYAGVKAGQG), 64–75 (TFTYGVFGGYQI), 83–91 (LAAELGYDD), 110–121 (HGAYLSLKGSYE), 126–134 (LDVYGKAGV), 164–173 (GLFAVGAEYA), 178–185 (LAVRLEYQ), and 211–219 (CINAGISYR). The 127-residue stretch at 233–359 (MVSKTFSLNS…RVEIAVNGTK (127 aa)) folds into the OmpA-like domain. A disulfide bridge links Cys332 with Cys344.

The protein belongs to the outer membrane OOP (TC 1.B.6) superfamily. OmpA family. As to quaternary structure, monomer and homodimer.

The protein resides in the cell outer membrane. Its subcellular location is the fimbrium. Its function is as follows. Acts as a fimbriae subunit, allowing adhesion to host cells. With TolR probably plays a role in maintaining the position of the peptidoglycan cell wall in the periplasm. Acts as a porin with low permeability that allows slow penetration of small solutes; an internal gate slows down solute passage. This chain is Outer membrane protein P5, found in Haemophilus influenzae.